Here is a 177-residue protein sequence, read N- to C-terminus: Immunity protein CdiI-YPIII (177 aa).

In terms of assembly, interacts with the C-terminal DNase fragment (residues 954-1077) of cognate toxin CdiA-YPIII.

Immunity protein component of a toxin-immunity protein module, which functions as a cellular contact-dependent growth inhibition (CDI) system. CDI modules allow bacteria to communicate with and inhibit the growth of closely related neighboring bacteria in a contact-dependent fashion. Neutralizes the toxic activity of cognate toxin CdiA-YPIII (residues 954-1077). Does not inhibit toxic activity of CdiA from other toxin-immunity modules. The protein is Immunity protein CdiI-YPIII of Yersinia pseudotuberculosis serotype O:3 (strain YPIII).